Reading from the N-terminus, the 127-residue chain is Fluoride-specific ion channel FluC (127 aa).

3 consecutive transmembrane segments (helical) span residues 28 to 48 (LALF…SLAM), 73 to 93 (TGVL…ALLI), and 98 to 118 (VGLA…GLFL). 2 residues coordinate Na(+): Gly-77 and Thr-80.

Belongs to the fluoride channel Fluc/FEX (TC 1.A.43) family.

It localises to the cell inner membrane. The catalysed reaction is fluoride(in) = fluoride(out). Na(+) is not transported, but it plays an essential structural role and its presence is essential for fluoride channel function. Functionally, fluoride-specific ion channel. Important for reducing fluoride concentration in the cell, thus reducing its toxicity. The chain is Fluoride-specific ion channel FluC from Beijerinckia indica subsp. indica (strain ATCC 9039 / DSM 1715 / NCIMB 8712).